Consider the following 313-residue polypeptide: Protein EMSY-LIKE 2 (313 aa).

The ENT domain occupies 1-88; that stretch reads MEAQIHILEQ…HQSLDVHPSP (88 aa). A coiled-coil region spans residues 35-58; that stretch reads MTNLRKELRISDDENRQLLNNVHN. 2 disordered regions span residues 84–106 and 195–229; these read VHPS…YPSI and LNVG…REHL. Residues 206–219 show a composition bias toward basic residues; that stretch reads GNRRTLSHGGRGRG. Residues 267-293 adopt a coiled-coil conformation; sequence HELDKAKKLLKEHEQALIAAIARLTDA. Ser294 is modified (phosphoserine). Positions 294 to 313 are disordered; that stretch reads SDYESDGEEPYSHELPMLLG.

Interacts with EDM2 in nucleus.

The protein resides in the nucleus. Its function is as follows. Probably involved in the regulation of chromatin states. Contributes to RPP7-mediated and basal immunity, especially against Hyaloperonospora arabidopsidis isolate Hiks1. Regulates negatively EDM2-dependent floral transition. In Arabidopsis thaliana (Mouse-ear cress), this protein is Protein EMSY-LIKE 2.